A 1021-amino-acid chain; its full sequence is Putative 115 kDa protein in type-1 retrotransposable element R1DM (1021 aa).

In terms of domain architecture, Reverse transcriptase spans 479–741 (RCIRLGYFPA…RSCRYLGITV (263 aa)). Residues 955–971 (CACGDPYEDWMHILCAC) form a gag-like cysteine motif region.

This is Putative 115 kDa protein in type-1 retrotransposable element R1DM (R1A1-element\ORF2) from Drosophila melanogaster (Fruit fly).